The chain runs to 86 residues: Translation initiation factor IF-1 (86 aa).

One can recognise an S1-like domain in the interval 1-72 (MPKDDVIKME…TKGRIVYRKK (72 aa)).

This sequence belongs to the IF-1 family. As to quaternary structure, component of the 30S ribosomal translation pre-initiation complex which assembles on the 30S ribosome in the order IF-2 and IF-3, IF-1 and N-formylmethionyl-tRNA(fMet); mRNA recruitment can occur at any time during PIC assembly.

Its subcellular location is the cytoplasm. One of the essential components for the initiation of protein synthesis. Stabilizes the binding of IF-2 and IF-3 on the 30S subunit to which N-formylmethionyl-tRNA(fMet) subsequently binds. Helps modulate mRNA selection, yielding the 30S pre-initiation complex (PIC). Upon addition of the 50S ribosomal subunit IF-1, IF-2 and IF-3 are released leaving the mature 70S translation initiation complex. In Pseudothermotoga lettingae (strain ATCC BAA-301 / DSM 14385 / NBRC 107922 / TMO) (Thermotoga lettingae), this protein is Translation initiation factor IF-1.